Here is a 921-residue protein sequence, read N- to C-terminus: MAAVAADPAAAAVPASAEDRETQPEAMPDLDQQWRQIGNGRERPLRAGESWFLVEKHWYKQWEAYVKGGDQDASTFPGSINNSGLFEDQISWHLRERLVEGDDYVLLPAPAWNYLVSWYGLKDDQPPIERKVIELPGIRKVEVYPIELLLVQHSDMETALTIQFSYSDSVDLVLQTAREQFLVEPQEDTRLWTKNSEGSLDRLCNTQITLLDACLETGQLVIMETRNKDGTWPSAQLCGMNNMPDEDEDFQGQPGICGLTNLGNTCFMNSALQCLSNVPQLTEYFLNNRYLEELNFRNPLGMKGELAEAYADLVKQTWSGYHRSIVPNVFKNKVGHFASQFLGYQQHDSQELLSFLLDGLHEDLNRVKKKEYVELCNGAGRPDLEVAQEAWQNHKRRNDSVIVDTFHGLFKSTLVCPDCGNVSVTFDPFCYLSVPLPVCSRRVLEVFFVPMDPRRKPEQHRVVVPKKGNISDLCVALSTHTSVAPDKMIVADVFSHRFYKLYQLEDPLSGILDRDDIFVYEVTGRIEPVEGSRDDIVVPVYLRERTPSRDYNNSYYGLILFGHPLLVSVPRDRFSWEGLYNILMYRLSRYVTKPTSDDDDGDEKGDENEDEDVEDDSSSEEEKEEMSGPTDNDGTQESEQEQAGTSSGVTGRCPSLLDNSLHTSQWPPRRRRKQLFTLQTVNSNGTSDRTTSPEEAQTQPYIAMDWEPEMKRRYYDEVEAEGYVKHDCVGYMLKKNPVQLKECIKLFTTVETLEKENPWYCSSCKQHQLATKKLDLWMLPEVLIIHLKRFSFSKFSREKLDTLVQFPIRDLDFSEFVIKPKNESAPDLYKYDLIAVSNHYGGMRDGHYTTFACNKDSGQWHYFDDNSVSPVNENQIESKAAYVLFYQRQDVGRRQSQTASSETPTSPASSSTPNSDIMDVN.

A compositionally biased stretch (low complexity) spans 1–16; the sequence is MAAVAADPAAAAVPAS. The segment at 1–29 is disordered; that stretch reads MAAVAADPAAAAVPASAEDRETQPEAMPD. One can recognise a DUSP domain in the interval 28–133; sequence PDLDQQWRQI…DQPPIERKVI (106 aa). At lysine 194 the chain carries N6-acetyllysine. Positions 257-889 constitute a USP domain; that stretch reads CGLTNLGNTC…AAYVLFYQRQ (633 aa). The active-site Nucleophile is the cysteine 266. The disordered stretch occupies residues 592-697; that stretch reads TKPTSDDDDG…DRTTSPEEAQ (106 aa). Phosphoserine is present on serine 596. Residues 597–624 are compositionally biased toward acidic residues; the sequence is DDDDGDEKGDENEDEDVEDDSSSEEEKE. Polar residues-rich tracts occupy residues 657 to 666 and 676 to 697; these read LDNSLHTSQW and FTLQTVNSNGTSDRTTSPEEAQ. Position 692 is a phosphoserine (serine 692). The active-site Proton acceptor is the histidine 847. The tract at residues 893–921 is disordered; it reads RRQSQTASSETPTSPASSSTPNSDIMDVN. Low complexity predominate over residues 895 to 915; it reads QSQTASSETPTSPASSSTPNS. At serine 906 the chain carries Phosphoserine.

Belongs to the peptidase C19 family. In terms of assembly, monomer. Associated component of the Polycomb group (PcG) multiprotein PRC1-like complex. Interacts with RANBP9/RANBPM. Interacts with BRCA2. Interacts with CHUK/IKKA. Interacts with NFKBIA. Interacts with SPRY3, RAE1, MYCBP2/PAM, and KCTD6.

The protein resides in the nucleus. It localises to the cytoplasm. It is found in the chromosome. It catalyses the reaction Thiol-dependent hydrolysis of ester, thioester, amide, peptide and isopeptide bonds formed by the C-terminal Gly of ubiquitin (a 76-residue protein attached to proteins as an intracellular targeting signal).. Its function is as follows. Protease that can remove conjugated ubiquitin from target proteins and polyubiquitin chains. Inhibits the degradation of target proteins by the proteasome. Cleaves preferentially 'Lys-6' and 'Lys-63'-linked ubiquitin chains. Has lower activity with 'Lys-11' and 'Lys-33'-linked ubiquitin chains, and extremely low activity with 'Lys-27', 'Lys-29' and 'Lys-48'-linked ubiquitin chains (in vitro). Plays a role in the regulation of pathways leading to NF-kappa-B activation. Plays a role in the regulation of DNA repair after double-stranded DNA breaks. Acts as a chromatin regulator via its association with the Polycomb group (PcG) multiprotein PRC1-like complex; may act by deubiquitinating components of the PRC1-like comple. Promotes cell proliferation by deubiquitinating phosphorylated E2F1x. The protein is Ubiquitin carboxyl-terminal hydrolase 11 of Rattus norvegicus (Rat).